Here is a 438-residue protein sequence, read N- to C-terminus: Adenylosuccinate synthetase (438 aa).

GTP contacts are provided by residues 12-18 (GDEGKGK) and 40-42 (GHT). The active-site Proton acceptor is the aspartate 13. Positions 13 and 40 each coordinate Mg(2+). IMP contacts are provided by residues 13 to 16 (DEGK), 38 to 41 (NAGH), threonine 128, arginine 142, glutamine 223, threonine 238, and arginine 302. Residue histidine 41 is the Proton donor of the active site. Residue 298–304 (TTTGRPR) coordinates substrate. GTP is bound by residues arginine 304, 330-332 (KLD), and 412-414 (GVG).

This sequence belongs to the adenylosuccinate synthetase family. Homodimer. Mg(2+) is required as a cofactor.

The protein localises to the cytoplasm. The catalysed reaction is IMP + L-aspartate + GTP = N(6)-(1,2-dicarboxyethyl)-AMP + GDP + phosphate + 2 H(+). It participates in purine metabolism; AMP biosynthesis via de novo pathway; AMP from IMP: step 1/2. In terms of biological role, plays an important role in the de novo pathway of purine nucleotide biosynthesis. Catalyzes the first committed step in the biosynthesis of AMP from IMP. This Leifsonia xyli subsp. xyli (strain CTCB07) protein is Adenylosuccinate synthetase.